Here is a 297-residue protein sequence, read N- to C-terminus: Heme A synthase (297 aa).

Topologically, residues 1–6 (MNRKLS) are cytoplasmic. A helical membrane pass occupies residues 7–27 (IFSAFVTFTMMIVLLMGGTVT). Over 28–62 (KTDSGNGCGTDWPLCHGELIPTNPSVETMIEYSHR) the chain is Extracellular. Cysteine 35 and cysteine 42 are oxidised to a cystine. Glutamate 58 is an active-site residue. A heme o-binding site is contributed by histidine 61. A helical transmembrane segment spans residues 63-83 (AVTGVVGLLIIALCLWTLVAF). At 84–90 (KDRLDIK) the chain is on the cytoplasmic side. Residues 91 to 111 (IFAFLAFIFMLIQSIVGAGAV) form a helical membrane-spanning segment. Over 112–121 (VWQQSDLVMA) the chain is Extracellular. A helical membrane pass occupies residues 122–142 (LHFGISLISFASLLILTILIM). Position 123 (histidine 123) interacts with heme o. Over 143-160 (ERSGQEFRESVPAFLRKL) the chain is Cytoplasmic. A helical transmembrane segment spans residues 161 to 181 (LYGLLIYTLIVVYTGAFVRHV). The Extracellular segment spans residues 182–201 (GATYACVGWPVCSQPTMTFE). A disulfide bond links cysteine 187 and cysteine 193. Residues 202 to 222 (AWVQMIHRILAGLLFFYTLFV) traverse the membrane as a helical segment. Histidine 208 provides a ligand contact to heme b. Residues 223-236 (HYTAIRLKHRTSRT) lie on the Cytoplasmic side of the membrane. A helical transmembrane segment spans residues 237–257 (GMLFATFFISCQVATGAWIVL). At 258–262 (GGHAT) the chain is on the extracellular side. Residues 263–283 (YVPLLHAFLITCYFGVISYLA) traverse the membrane as a helical segment. Histidine 268 is a binding site for heme b. The Cytoplasmic segment spans residues 284 to 297 (YHAFRTRKKDSRLR).

Belongs to the COX15/CtaA family. Type 1 subfamily. In terms of assembly, interacts with CtaB. Heme b serves as cofactor.

The protein localises to the cell membrane. It catalyses the reaction Fe(II)-heme o + 2 A + H2O = Fe(II)-heme a + 2 AH2. It participates in porphyrin-containing compound metabolism; heme A biosynthesis; heme A from heme O: step 1/1. Functionally, catalyzes the conversion of heme O to heme A by two successive hydroxylations of the methyl group at C8. The first hydroxylation forms heme I, the second hydroxylation results in an unstable dihydroxymethyl group, which spontaneously dehydrates, resulting in the formyl group of heme A. This chain is Heme A synthase, found in Exiguobacterium sibiricum (strain DSM 17290 / CCUG 55495 / CIP 109462 / JCM 13490 / 255-15).